The sequence spans 408 residues: tRNA pseudouridine synthase D (408 aa).

Residue Asp-82 is the Nucleophile of the active site. Residues 157 to 367 enclose the TRUD domain; it reads GVPNRFGEQR…MEGERRPLRV (211 aa).

This sequence belongs to the pseudouridine synthase TruD family.

The enzyme catalyses uridine(13) in tRNA = pseudouridine(13) in tRNA. Its function is as follows. Responsible for synthesis of pseudouridine from uracil-13 in transfer RNAs. The sequence is that of tRNA pseudouridine synthase D from Geobacter sulfurreducens (strain ATCC 51573 / DSM 12127 / PCA).